The following is a 115-amino-acid chain: NADH-ubiquinone oxidoreductase chain 3 (115 aa).

Helical transmembrane passes span M1–L21, I58–I78, and I84–Y104.

It belongs to the complex I subunit 3 family.

The protein resides in the mitochondrion membrane. It carries out the reaction a ubiquinone + NADH + 5 H(+)(in) = a ubiquinol + NAD(+) + 4 H(+)(out). Functionally, core subunit of the mitochondrial membrane respiratory chain NADH dehydrogenase (Complex I) that is believed to belong to the minimal assembly required for catalysis. Complex I functions in the transfer of electrons from NADH to the respiratory chain. The immediate electron acceptor for the enzyme is believed to be ubiquinone. This Locusta migratoria (Migratory locust) protein is NADH-ubiquinone oxidoreductase chain 3 (ND3).